A 342-amino-acid polypeptide reads, in one-letter code: Probable alcohol acetyltransferase (342 aa).

The N-terminal 38 residues, 1 to 38, are a transit peptide targeting the mitochondrion; it reads MMILGKAGILAQYGTIYVRQNTIRNNLSSCIFKQSLCA. Positions 39-46 are cleaved as a propeptide — removed in mature form; the sequence is FHSLAKVL. The 252-residue stretch at 75–326 folds into the AB hydrolase-1 domain; the sequence is PPIIILHGLF…AGHWVNAEKP (252 aa). Residues Ser-152 and His-319 each act as charge relay system in the active site.

The protein belongs to the AB hydrolase superfamily. Post-translationally, processed by both the mitochondrial processing peptidase (MPP) and the mitochondrial octapeptidyl aminopeptidase (OCT1).

The protein localises to the mitochondrion. Its function is as follows. Probable alcohol acetyltransferase that uses acetyl-CoA to synthesize acetate esters from various alcohols. Not involved in the synthesis of ethyl acetate. This Saccharomyces cerevisiae (strain ATCC 204508 / S288c) (Baker's yeast) protein is Probable alcohol acetyltransferase (IMO32).